The sequence spans 591 residues: Pentatricopeptide repeat-containing protein At3g47530 (591 aa).

9 PPR repeats span residues 76–110 (TLSH…SSLP), 112–146 (NPLS…GFLS), 147–177 (DSLL…IPKR), 178–208 (DTVS…MKND), 216–250 (DGVT…GLSG), 251–281 (ALNL…MRER), 282–316 (NVVS…GISP), 317–351 (EEQT…EFKI), and 354–384 (NLHH…MEMK). Residues 389–464 (IWRTLLGACR…KPGCSAIELQ (76 aa)) are type E motif. The segment at 465 to 495 (GTVHEFIVDDVSHPRKEEIYKMLAEINQQLK) is type E(+) motif. The tract at residues 496–591 (IAGYVAEITS…GGSCSCNDFW (96 aa)) is type DYW motif.

It belongs to the PPR family. PCMP-H subfamily.

The protein is Pentatricopeptide repeat-containing protein At3g47530 (PCMP-H76) of Arabidopsis thaliana (Mouse-ear cress).